A 1088-amino-acid polypeptide reads, in one-letter code: RNA-directed RNA polymerase (1088 aa).

Positions 501–687 (LSYGDVTRFL…AKRYIAGGKI (187 aa)) constitute a RdRp catalytic domain.

Belongs to the reoviridae RNA-directed RNA polymerase family. In terms of assembly, interacts with VP3 (Potential). Interacts with VP2; this interaction activates VP1. Interacts with NSP5; this interaction is probably necessary for the formation of functional virus factories. Interacts with NSP2; this interaction is weak. The cofactor is Mg(2+).

The protein localises to the virion. The enzyme catalyses RNA(n) + a ribonucleoside 5'-triphosphate = RNA(n+1) + diphosphate. RNA-directed RNA polymerase that is involved in both transcription and genome replication. Together with VP3 capping enzyme, forms an enzyme complex positioned near the channels situated at each of the five-fold vertices of the core. Following infection, the outermost layer of the virus is lost, leaving a double-layered particle (DLP) made up of the core and VP6 shell. VP1 then catalyzes the transcription of fully conservative plus-strand genomic RNAs that are extruded through the DLP's channels into the cytoplasm where they function as mRNAs for translation of viral proteins. One copy of each of the viral (+)RNAs is also recruited during core assembly, together with newly synthesized polymerase complexes and VP2. The polymerase of these novo-formed particles catalyzes the synthesis of complementary minus-strands leading to dsRNA formation. To do so, the polymerase specifically recognizes and binds 4 bases 5'-UGUG-3' in the conserved 3'-sequence of plus-strand RNA templates. VP2 presumably activates the autoinhibited VP1-RNA complex to coordinate packaging and genome replication. Once dsRNA synthesis is complete, the polymerase switches to the transcriptional mode, thus providing secondary transcription. This is RNA-directed RNA polymerase from Rotavirus A (strain RVA/SA11-Both/G3P5B[2]) (RV-A).